Reading from the N-terminus, the 378-residue chain is Cytochrome P450 monooxygenase pytD (378 aa).

Cysteine 321 is a binding site for heme.

This sequence belongs to the cytochrome P450 family. Heme serves as cofactor.

The protein operates within secondary metabolite biosynthesis. Cytochrome P450 monooxygenase pytD; part of the gene cluster that mediates the biosynthesis of pyranterreones, a family of antioxidative compounds. The first step of pyranonigrins biosynthesis is performed by the hybrid PKS-NRPS synthetase pytA that condenses 4 malonyl-CoA units ato the acetyl starter unit by the modular PKS of pytA. The acyl chain is then connected to an L-serine through the amide bond by the modular NRPS of pytA. A tetramic acid is formed and released from the PKS-NRPS pytA to give pyranterreone 5 with the help of the thioesterase pytI. Pyranterreone 5 could be methylated by pytC to afford pyranterreone 6. Both pyranterreones 5 and 6 are subsequently oxidized by the FAD-linked oxidoreductase pytB and the cytochrome P450 monooxygenase pytD to form the fused gamma-pyrone core, resulting in pyranterreones 7 and 11, respectively. The hydroxy group at C-8 of pyranterreones 7 and 11 are dehydrated by the aspartyl protease pytH to form a delta-7 double bond to give pyranterreones 3 and 1, 2 accordingly. The exo-methylene of pyranterreone 3 could be reduced into a pendant methyl by reductase pytE to provide pyranterreone 4, also known as cordylactam. Pyranterreone 4 can be reconverted to pyranterreone 3 through pytB-catalyzed dehydrogenation or further oxidized to pyranterreones 9 and 10. In Aspergillus terreus (strain NIH 2624 / FGSC A1156), this protein is Cytochrome P450 monooxygenase pytD.